Here is a 752-residue protein sequence, read N- to C-terminus: DNA topoisomerase 4 subunit A (752 aa).

In terms of domain architecture, Topo IIA-type catalytic spans leucine 31–methionine 494. Tyrosine 120 acts as the O-(5'-phospho-DNA)-tyrosine intermediate in catalysis. Residues tyrosine 472–histidine 492 form a disordered region. Over residues glycine 473 to histidine 492 the composition is skewed to basic and acidic residues.

It belongs to the type II topoisomerase GyrA/ParC subunit family. ParC type 1 subfamily. As to quaternary structure, heterotetramer composed of ParC and ParE.

Its subcellular location is the cell membrane. It carries out the reaction ATP-dependent breakage, passage and rejoining of double-stranded DNA.. Functionally, topoisomerase IV is essential for chromosome segregation. It relaxes supercoiled DNA. Performs the decatenation events required during the replication of a circular DNA molecule. The sequence is that of DNA topoisomerase 4 subunit A from Salmonella typhimurium (strain LT2 / SGSC1412 / ATCC 700720).